The primary structure comprises 118 residues: Large ribosomal subunit protein bL19 (118 aa).

This sequence belongs to the bacterial ribosomal protein bL19 family.

In terms of biological role, this protein is located at the 30S-50S ribosomal subunit interface and may play a role in the structure and function of the aminoacyl-tRNA binding site. This chain is Large ribosomal subunit protein bL19, found in Campylobacter jejuni subsp. jejuni serotype O:6 (strain 81116 / NCTC 11828).